Here is a 150-residue protein sequence, read N- to C-terminus: 3-dehydroquinate dehydratase (150 aa).

The active-site Proton acceptor is the Tyr26. Residues Asn77, His83, and Asp90 each contribute to the substrate site. His103 acts as the Proton donor in catalysis. Substrate contacts are provided by residues Leu104 to Ser105 and Arg114.

This sequence belongs to the type-II 3-dehydroquinase family. In terms of assembly, homododecamer.

It catalyses the reaction 3-dehydroquinate = 3-dehydroshikimate + H2O. The protein operates within metabolic intermediate biosynthesis; chorismate biosynthesis; chorismate from D-erythrose 4-phosphate and phosphoenolpyruvate: step 3/7. Functionally, catalyzes a trans-dehydration via an enolate intermediate. In Photobacterium profundum (strain SS9), this protein is 3-dehydroquinate dehydratase.